The chain runs to 502 residues: Cobyric acid synthase (502 aa).

Positions Val-260–Phe-433 constitute a GATase cobBQ-type domain. Cys-341 acts as the Nucleophile in catalysis. His-425 is an active-site residue.

It belongs to the CobB/CobQ family. CobQ subfamily.

Its pathway is cofactor biosynthesis; adenosylcobalamin biosynthesis. In terms of biological role, catalyzes amidations at positions B, D, E, and G on adenosylcobyrinic A,C-diamide. NH(2) groups are provided by glutamine, and one molecule of ATP is hydrogenolyzed for each amidation. This is Cobyric acid synthase from Streptomyces coelicolor (strain ATCC BAA-471 / A3(2) / M145).